Reading from the N-terminus, the 294-residue chain is Eukaryotic translation initiation factor 3 subunit F (294 aa).

Positions 7–155 (VNVHPGVYMN…VRAYLRSKAG (149 aa)) constitute an MPN domain.

Belongs to the eIF-3 subunit F family. Component of the eukaryotic translation initiation factor 3 (eIF-3) complex.

Its subcellular location is the cytoplasm. Functionally, component of the eukaryotic translation initiation factor 3 (eIF-3) complex, which is involved in protein synthesis of a specialized repertoire of mRNAs and, together with other initiation factors, stimulates binding of mRNA and methionyl-tRNAi to the 40S ribosome. The eIF-3 complex specifically targets and initiates translation of a subset of mRNAs involved in cell proliferation. The polypeptide is Eukaryotic translation initiation factor 3 subunit F (Caenorhabditis elegans).